Here is a 320-residue protein sequence, read N- to C-terminus: tRNA pseudouridine synthase B (320 aa).

Asp-48 (nucleophile) is an active-site residue.

This sequence belongs to the pseudouridine synthase TruB family. Type 1 subfamily.

It catalyses the reaction uridine(55) in tRNA = pseudouridine(55) in tRNA. Functionally, responsible for synthesis of pseudouridine from uracil-55 in the psi GC loop of transfer RNAs. In Mycobacterium leprae (strain TN), this protein is tRNA pseudouridine synthase B.